The primary structure comprises 361 residues: Phenylalanine--tRNA ligase alpha subunit (361 aa).

Glu260 contributes to the Mg(2+) binding site.

The protein belongs to the class-II aminoacyl-tRNA synthetase family. Phe-tRNA synthetase alpha subunit type 1 subfamily. In terms of assembly, tetramer of two alpha and two beta subunits. Requires Mg(2+) as cofactor.

The protein localises to the cytoplasm. The catalysed reaction is tRNA(Phe) + L-phenylalanine + ATP = L-phenylalanyl-tRNA(Phe) + AMP + diphosphate + H(+). The polypeptide is Phenylalanine--tRNA ligase alpha subunit (Chelativorans sp. (strain BNC1)).